The primary structure comprises 256 residues: Large ribosomal subunit protein bL28m (256 aa).

The transit peptide at 1-55 (MPLHKYPVWLWKRLQLREGICSRLPGHYLRSLEEERTPTPVHYRPHGAKFKINPK) directs the protein to the mitochondrion.

It belongs to the bacterial ribosomal protein bL28 family. In terms of assembly, component of the mitochondrial large ribosomal subunit (mt-LSU). Mature mammalian 55S mitochondrial ribosomes consist of a small (28S) and a large (39S) subunit. The 28S small subunit contains a 12S ribosomal RNA (12S mt-rRNA) and 30 different proteins. The 39S large subunit contains a 16S rRNA (16S mt-rRNA), a copy of mitochondrial valine transfer RNA (mt-tRNA(Val)), which plays an integral structural role, and 52 different proteins. Interacts with OXA1L. As to expression, found in a variety of normal tissues including spleen, testes, thymus, liver, kidney, brain, adrenal, lung and retinal tissue.

The protein localises to the mitochondrion. This chain is Large ribosomal subunit protein bL28m (MRPL28), found in Homo sapiens (Human).